We begin with the raw amino-acid sequence, 70 residues long: Mu-conotoxin-like Am3.4 (70 aa).

Residues 1-20 (MMYKLGVLLIICLLLFPLTA) form the signal peptide. Positions 21–53 (VPQDGDQPADRPAERMQDDISFEHDRFFDPVKR) are excised as a propeptide. 3 disulfide bridges follow: Cys-54–Cys-69, Cys-55–Cys-65, and Cys-61–Cys-68. At Pro-67 the chain carries 4-hydroxyproline; partial; in major form. Position 69 is a cysteine amide (Cys-69).

The protein belongs to the conotoxin M superfamily. Post-translationally, contains 3 disulfide bonds. As to expression, expressed by the venom duct.

It localises to the secreted. In terms of biological role, mu-conotoxins block voltage-gated sodium channels (Nav). The sequence is that of Mu-conotoxin-like Am3.4 from Conus amadis (Amadis cone).